Here is a 318-residue protein sequence, read N- to C-terminus: Ribose-phosphate pyrophosphokinase (318 aa).

ATP is bound by residues 46-48 (DGE) and 105-106 (RQ). The Mg(2+) site is built by histidine 139 and aspartate 178. Residue lysine 201 is part of the active site. D-ribose 5-phosphate contacts are provided by residues arginine 203, aspartate 227, and 231–235 (DTAGT).

Belongs to the ribose-phosphate pyrophosphokinase family. Class I subfamily. Homohexamer. Mg(2+) serves as cofactor.

It localises to the cytoplasm. It carries out the reaction D-ribose 5-phosphate + ATP = 5-phospho-alpha-D-ribose 1-diphosphate + AMP + H(+). Its pathway is metabolic intermediate biosynthesis; 5-phospho-alpha-D-ribose 1-diphosphate biosynthesis; 5-phospho-alpha-D-ribose 1-diphosphate from D-ribose 5-phosphate (route I): step 1/1. In terms of biological role, involved in the biosynthesis of the central metabolite phospho-alpha-D-ribosyl-1-pyrophosphate (PRPP) via the transfer of pyrophosphoryl group from ATP to 1-hydroxyl of ribose-5-phosphate (Rib-5-P). This chain is Ribose-phosphate pyrophosphokinase, found in Helicobacter pylori (strain J99 / ATCC 700824) (Campylobacter pylori J99).